The following is a 512-amino-acid chain: Protein disulfide-isomerase (512 aa).

Positions 1 to 24 (MAKNVAIFGLLFSLLLLVPSQIFA) are cleaved as a signal peptide. The Thioredoxin 1 domain occupies 25 to 144 (EESSTDAKEF…IVEYLKKQSG (120 aa)). Catalysis depends on nucleophile residues cysteine 62 and cysteine 65. Cysteine 62 and cysteine 65 are disulfide-bonded. A glycan (N-linked (GlcNAc...) asparagine) is linked at asparagine 278. Residues 357-485 (YKDGKVEPFV…IIEFIEKNKD (129 aa)) form the Thioredoxin 2 domain. Active-site nucleophile residues include cysteine 407 and cysteine 410. A disulfide bridge connects residues cysteine 407 and cysteine 410. Residues 487 to 496 (TGAAHQEVEQ) are compositionally biased toward basic and acidic residues. Residues 487-512 (TGAAHQEVEQPKAAAQPEAEQPKDEL) are disordered. The Prevents secretion from ER motif lies at 509–512 (KDEL).

The protein belongs to the protein disulfide isomerase family.

It is found in the endoplasmic reticulum lumen. The enzyme catalyses Catalyzes the rearrangement of -S-S- bonds in proteins.. Participates in the folding of proteins containing disulfide bonds, may be involved in glycosylation, prolyl hydroxylation and triglyceride transfer. The protein is Protein disulfide-isomerase (PDI) of Medicago sativa (Alfalfa).